Consider the following 160-residue polypeptide: MAEKTYVMTLAEKKQLEAELEEYKLVRRPEVVERIKIARSYGDLSENSEYEAAKDEQAFIEGQIQILETKIRYAEIVDSDAVANDEVAIGKTVVVQEVGTSDKDTYHIVGAAGADIFSGKISNESPIAQALIGKKVGDKVAIESPAGSYSVEILSVEKTS.

Residues 1–72 (MAEKTYVMTL…QIQILETKIR (72 aa)) adopt a coiled-coil conformation.

It belongs to the GreA/GreB family.

Its function is as follows. Necessary for efficient RNA polymerase transcription elongation past template-encoded arresting sites. The arresting sites in DNA have the property of trapping a certain fraction of elongating RNA polymerases that pass through, resulting in locked ternary complexes. Cleavage of the nascent transcript by cleavage factors such as GreA or GreB allows the resumption of elongation from the new 3'terminus. GreA releases sequences of 2 to 3 nucleotides. This Streptococcus thermophilus (strain CNRZ 1066) protein is Transcription elongation factor GreA.